The primary structure comprises 310 residues: MSSKLLTIQLLEELVHAAELNQEGKTADYIPELANVNQELTAIAVQPLGEKTLAYSNNPLHPVTLQSTGKMIPLIGLLEEFGADQLFEWVKVEPSGDDFASITRLEQFGPKPSNPMLNAGAIALCSRIPGVGEQQFRWLEHWVQKLFNQRLSINPLVFASEKRTGNRNRALAYLLKSRSNLGADVHETLDLYFALCSYEAMLDQMLYLPAVLANKGQDPDTGEQILSIETCKITLAIMATCGLYDETGTHMVKTGMPAKSGVSGYTIAVVPGKAGIVVLSPRVNAKGNSIRGEIMLEGLSKAMNWHFALP.

7 residues coordinate substrate: Ser67, Asn118, Glu161, Asn168, Tyr192, Tyr244, and Val262.

The protein belongs to the glutaminase family. As to quaternary structure, homotetramer.

It carries out the reaction L-glutamine + H2O = L-glutamate + NH4(+). In Legionella pneumophila (strain Paris), this protein is Glutaminase.